The sequence spans 294 residues: Elongation factor Ts (294 aa).

The involved in Mg(2+) ion dislocation from EF-Tu stretch occupies residues 82–85 (TDFV).

The protein belongs to the EF-Ts family.

The protein localises to the cytoplasm. Associates with the EF-Tu.GDP complex and induces the exchange of GDP to GTP. It remains bound to the aminoacyl-tRNA.EF-Tu.GTP complex up to the GTP hydrolysis stage on the ribosome. The sequence is that of Elongation factor Ts from Nitrosomonas eutropha (strain DSM 101675 / C91 / Nm57).